Reading from the N-terminus, the 195-residue chain is MMRRASQERRTTETKIKLHLQLDESENISIRTGVGFFDHMLTLFAKHGRFGLQIEAVGDMFVDAHHTVEDVGIVLGNCLREVLQNKEGMNRYGAAYVPMDEALGFVAIDISGRSYLVFQGELVNPKLGDFDTELTEEFFRAVAHAAHITLHARILYGNNTHHKIEALFKAFGRALREAVDKNEKIVGINSTKGML.

This sequence belongs to the imidazoleglycerol-phosphate dehydratase family.

It is found in the cytoplasm. The catalysed reaction is D-erythro-1-(imidazol-4-yl)glycerol 3-phosphate = 3-(imidazol-4-yl)-2-oxopropyl phosphate + H2O. It functions in the pathway amino-acid biosynthesis; L-histidine biosynthesis; L-histidine from 5-phospho-alpha-D-ribose 1-diphosphate: step 6/9. The sequence is that of Imidazoleglycerol-phosphate dehydratase from Bacillus cytotoxicus (strain DSM 22905 / CIP 110041 / 391-98 / NVH 391-98).